The chain runs to 122 residues: Serum amyloid A-1 protein (122 aa).

A signal peptide spans 1-18; it reads MKLLTGLVFCSLVLGVSS. Residues 19–45 form an important for amyloid formation; forms amyloid fibrils in vitro region; the sequence is RSFFSFLGEAFDGARDMWRAYSDMREA. Positions 95–122 are cleaved as a propeptide — often cleaved during amyloidogenesis; the sequence is LADQAANEWGRSGKDPNHFRPAGLPEKY. Residues 98–122 form a disordered region; sequence QAANEWGRSGKDPNHFRPAGLPEKY. N101 is modified (N4,N4-dimethylasparagine).

The protein belongs to the SAA family. In terms of assembly, homohexamer; dimer of trimers. Can form amyloid fibrils after partial proteolysis; the native, undenatured protein does not form amyloid fibrils (in vitro). Apolipoprotein of the HDL complex. Binds to heparin. Post-translationally, this protein is the precursor of amyloid protein A, which is formed by the removal of approximately 24 residues from the C-terminal end. As to expression, expressed by the liver; secreted in plasma (at protein level).

It is found in the secreted. In terms of biological role, major acute phase protein. The chain is Serum amyloid A-1 protein (SAA1) from Homo sapiens (Human).